A 309-amino-acid chain; its full sequence is Serine/threonine-protein phosphatase 2A catalytic subunit alpha isoform (309 aa).

Mn(2+)-binding residues include Asp57, His59, Asp85, and Asn117. Residues Asp57, His59, and Asp85 each coordinate Zn(2+). Fe(3+) is bound by residues Asp85 and Asn117. The active-site Proton donor is the His118. Residues His167 and His241 each coordinate Mn(2+). Fe(3+)-binding residues include His167 and His241. A Phosphotyrosine modification is found at Tyr307. A Leucine methyl ester modification is found at Leu309.

It belongs to the PPP phosphatase family. PP-1 subfamily. PP2A consists of a common heterodimeric core enzyme composed of PPP2CA, a 36 kDa catalytic subunit (subunit C), and PPP2R1A, a 65 kDa constant regulatory subunit (PR65 or subunit A), that associates with a variety of regulatory subunits. Proteins that associate with the core dimer include three families of regulatory subunits B (the R2/B/PR55/B55, R3/B''/PR72/PR130/PR59 and R5/B'/B56 families), the 48 kDa variable regulatory subunit, viral proteins, and cell signaling molecules. Interacts with the PP2A A subunit PPP2R1A. Interacts with the regulatory subunit PPP2R2A. Interacts (via C-terminus) with PTPA. Interacts with NXN; the interaction is direct. Interacts with KCTD20. Interacts with BTBD10. Interacts with SGO1 and SGO2. Interacts with RAF1. Interaction with IGBP1 protects unassembled PPP2CA from degradative ubiquitination. Interacts with GSK3B (via C2 domain). Interacts with MFHAS1; retains PPP2CA into the cytoplasm and excludes it from the nucleus. Interacts with PABIR1/FAM122A. Interacts with ADCY8; interaction is phosphatase activity-dependent; antagonizes interaction between ADCY8 and calmodulin. Interacts with CRTC3 (when phosphorylated at 'Ser-391'). Interacts with SPRY2; the interaction is inhibited by TESK1 interaction with SPRY2, possibly by vesicular sequestration of SPRY2. Interacts with TRAF3IP3. Interacts with AMBRA1 (via PxP motifs); enhancing interaction between PPP2CA and MYC or FOXO3. Forms a complex with AMBRA1 and BECN1; AMBRA1 and BECN1 components of the complex regulate MYC stability via different pathways. Part of the core of STRIPAK complexes composed of PP2A catalytic and scaffolding subunits, the striatins (PP2A regulatory subunits), the striatin-associated proteins MOB4, STRIP1 and STRIP2, PDCD10 and members of the STE20 kinases, such as STK24 and STK26. Phosphatase component of the Integrator-PP2A (INTAC) complex, composed of the Integrator core complex and protein phosphatase 2A subunits PPP2CA and PPP2R1A. Mn(2+) serves as cofactor. The cofactor is Fe(3+). Requires Zn(2+) as cofactor. Post-translationally, reversibly methyl esterified on Leu-309 by leucine carboxyl methyltransferase 1 (LCMT1) and protein phosphatase methylesterase 1 (PPME1). Carboxyl methylation influences the affinity of the catalytic subunit for the different regulatory subunits, thereby modulating the PP2A holoenzyme's substrate specificity, enzyme activity and cellular localization. In terms of processing, phosphorylation of either threonine (by autophosphorylation-activated protein kinase) or tyrosine results in inactivation of the phosphatase. Auto-dephosphorylation has been suggested as a mechanism for reactivation. Polyubiquitinated, leading to its degradation by the proteasome.

The protein resides in the cytoplasm. The protein localises to the nucleus. It is found in the chromosome. It localises to the centromere. Its subcellular location is the cytoskeleton. The protein resides in the spindle pole. It catalyses the reaction O-phospho-L-seryl-[protein] + H2O = L-seryl-[protein] + phosphate. It carries out the reaction O-phospho-L-threonyl-[protein] + H2O = L-threonyl-[protein] + phosphate. Inhibited by the interaction between PPP2R2A and ARPP19; this inhibition is enhanced when ARPP19 is phosphorylated. Inhibited by the interaction between PPP2R2A and PABIR1/FAM122A. Its function is as follows. Catalytic subunit of protein phosphatase 2A (PP2A), a serine/threonine phosphatase involved in the regulation of a wide variety of enzymes, signal transduction pathways, and cellular events. PP2A is the major phosphatase for microtubule-associated proteins (MAPs). PP2A can modulate the activity of phosphorylase B kinase casein kinase 2, mitogen-stimulated S6 kinase, and MAP-2 kinase. Cooperates with SGO2 to protect centromeric cohesin from separase-mediated cleavage in oocytes specifically during meiosis I. Can dephosphorylate various proteins, such as SV40 large T antigen, AXIN1, p53/TP53, PIM3, WEE1. Activates RAF1 by dephosphorylating it at 'Ser-259'. Mediates dephosphorylation of WEE1, preventing its ubiquitin-mediated proteolysis, increasing WEE1 protein levels, and promoting the G2/M checkpoint. Mediates dephosphorylation of MYC; promoting its ubiquitin-mediated proteolysis: interaction with AMBRA1 enhances interaction between PPP2CA and MYC. Mediates dephosphorylation of FOXO3; promoting its stabilization: interaction with AMBRA1 enhances interaction between PPP2CA and FOXO3. Catalyzes dephosphorylation of the pyrin domain of NLRP3, promoting assembly of the NLRP3 inflammasome. Together with RACK1 adapter, mediates dephosphorylation of AKT1 at 'Ser-473', preventing AKT1 activation and AKT-mTOR signaling pathway. Dephosphorylation of AKT1 is essential for regulatory T-cells (Treg) homeostasis and stability. Catalyzes dephosphorylation of PIM3, promotinh PIM3 ubiquitination and proteasomal degradation. Part of the striatin-interacting phosphatase and kinase (STRIPAK) complexes. STRIPAK complexes have critical roles in protein (de)phosphorylation and are regulators of multiple signaling pathways including Hippo, MAPK, nuclear receptor and cytoskeleton remodeling. Different types of STRIPAK complexes are involved in a variety of biological processes such as cell growth, differentiation, apoptosis, metabolism and immune regulation. Key mediator of a quality checkpoint during transcription elongation as part of the Integrator-PP2A (INTAC) complex. The INTAC complex drives premature transcription termination of transcripts that are unfavorably configured for transcriptional elongation: within the INTAC complex, PPP2CA catalyzes dephosphorylation of the C-terminal domain (CTD) of Pol II subunit POLR2A/RPB1 and SUPT5H/SPT5, thereby preventing transcriptional elongation. The polypeptide is Serine/threonine-protein phosphatase 2A catalytic subunit alpha isoform (PPP2CA) (Homo sapiens (Human)).